A 511-amino-acid polypeptide reads, in one-letter code: Maturase K (511 aa).

It belongs to the intron maturase 2 family. MatK subfamily.

The protein resides in the plastid. The protein localises to the chloroplast. Functionally, usually encoded in the trnK tRNA gene intron. Probably assists in splicing its own and other chloroplast group II introns. In Mandragora officinarum (Mandrake), this protein is Maturase K.